A 313-amino-acid polypeptide reads, in one-letter code: 4-diphosphocytidyl-2-C-methyl-D-erythritol kinase (313 aa).

Lys-27 is a catalytic residue. 110–120 (PIGGGVGGGSS) is a binding site for ATP. The active site involves Asp-152.

The protein belongs to the GHMP kinase family. IspE subfamily.

The enzyme catalyses 4-CDP-2-C-methyl-D-erythritol + ATP = 4-CDP-2-C-methyl-D-erythritol 2-phosphate + ADP + H(+). Its pathway is isoprenoid biosynthesis; isopentenyl diphosphate biosynthesis via DXP pathway; isopentenyl diphosphate from 1-deoxy-D-xylulose 5-phosphate: step 3/6. Functionally, catalyzes the phosphorylation of the position 2 hydroxy group of 4-diphosphocytidyl-2C-methyl-D-erythritol. In Histophilus somni (strain 2336) (Haemophilus somnus), this protein is 4-diphosphocytidyl-2-C-methyl-D-erythritol kinase.